Consider the following 369-residue polypeptide: Anhydro-N-acetylmuramic acid kinase (369 aa).

12–19 (GTSMDGVD) lines the ATP pocket.

This sequence belongs to the anhydro-N-acetylmuramic acid kinase family.

The enzyme catalyses 1,6-anhydro-N-acetyl-beta-muramate + ATP + H2O = N-acetyl-D-muramate 6-phosphate + ADP + H(+). It participates in amino-sugar metabolism; 1,6-anhydro-N-acetylmuramate degradation. Its pathway is cell wall biogenesis; peptidoglycan recycling. Catalyzes the specific phosphorylation of 1,6-anhydro-N-acetylmuramic acid (anhMurNAc) with the simultaneous cleavage of the 1,6-anhydro ring, generating MurNAc-6-P. Is required for the utilization of anhMurNAc either imported from the medium or derived from its own cell wall murein, and thus plays a role in cell wall recycling. The protein is Anhydro-N-acetylmuramic acid kinase of Shewanella oneidensis (strain ATCC 700550 / JCM 31522 / CIP 106686 / LMG 19005 / NCIMB 14063 / MR-1).